A 682-amino-acid chain; its full sequence is Potassium-transporting ATPase ATP-binding subunit (682 aa).

The next 4 membrane-spanning stretches (helical) occupy residues 34 to 54, 58 to 78, 219 to 239, and 254 to 274; these read PVMF…LAMV, IAGS…TVLF, IALT…TATL, and VLVA…LSAI. The active-site 4-aspartylphosphate intermediate is Asp307. ATP-binding positions include Asp344, Glu348, 377-384, and Lys395; that span reads FTAQSRMS. Mg(2+) is bound by residues Asp518 and Asp522. A run of 3 helical transmembrane segments spans residues 588 to 608, 616 to 636, and 662 to 682; these read FAII…LNVM, AILS…PLAL, and LVVP…LGLA.

It belongs to the cation transport ATPase (P-type) (TC 3.A.3) family. Type IA subfamily. The system is composed of three essential subunits: KdpA, KdpB and KdpC.

It localises to the cell inner membrane. It carries out the reaction K(+)(out) + ATP + H2O = K(+)(in) + ADP + phosphate + H(+). Part of the high-affinity ATP-driven potassium transport (or Kdp) system, which catalyzes the hydrolysis of ATP coupled with the electrogenic transport of potassium into the cytoplasm. This subunit is responsible for energy coupling to the transport system and for the release of the potassium ions to the cytoplasm. This Salmonella paratyphi B (strain ATCC BAA-1250 / SPB7) protein is Potassium-transporting ATPase ATP-binding subunit.